The following is a 301-amino-acid chain: Acetylglutamate kinase (301 aa).

Substrate contacts are provided by residues 71–72, Arg-93, and Asn-198; that span reads GG.

The protein belongs to the acetylglutamate kinase family. ArgB subfamily.

The protein localises to the cytoplasm. It carries out the reaction N-acetyl-L-glutamate + ATP = N-acetyl-L-glutamyl 5-phosphate + ADP. It functions in the pathway amino-acid biosynthesis; L-arginine biosynthesis; N(2)-acetyl-L-ornithine from L-glutamate: step 2/4. Catalyzes the ATP-dependent phosphorylation of N-acetyl-L-glutamate. The polypeptide is Acetylglutamate kinase (Zymomonas mobilis subsp. mobilis (strain ATCC 31821 / ZM4 / CP4)).